Reading from the N-terminus, the 117-residue chain is MAENNLAKIQFYEGTDEPVVPEIRLTRGNDGTTGQAIFIFEKPQALSSVADGEITGMRMIDAEGEILTREVKVKFVDGEPMFLEGTYIWKTKSDFDRFMRFANSYAKSNGLGYSEKK.

It belongs to the Psb28 family. In terms of assembly, part of the photosystem II complex.

It localises to the cellular thylakoid membrane. The polypeptide is Photosystem II reaction center Psb28 protein (Prochlorococcus marinus subsp. pastoris (strain CCMP1986 / NIES-2087 / MED4)).